The chain runs to 503 residues: Plant-specific TFIIB-related protein 1 (503 aa).

The segment at 1–33 (MKCPYCSSAQGRCTTTSSGRSITECSSCGRVME) adopts a TFIIB-type zinc-finger fold. 4 disordered regions span residues 328–366 (PEKA…AKPI), 411–431 (NAMD…LGDK), 436–455 (IYLR…TGIS), and 468–503 (GSSS…HGDF). Positions 333 to 346 (PTTTISTTRSTTPR) are enriched in low complexity. The span at 355-366 (FVEKDKPSAKPI) shows a compositional bias: basic and acidic residues.

In terms of processing, ubiquinated. Subsequent degradation by the proteasome pathway. Widely expressed.

It is found in the plastid. Its subcellular location is the chloroplast outer membrane. It localises to the nucleus. Plant-specific TFIIB-related protein that may be involved in an intracellular signaling pathway between plastids and the nucleus. May act as general transcription factor (GTF) of RNA polymerase I-dependent transcription and rRNA synthesis. Forms a ternary complex with TBP2 and the rDNA promoter region. This Arabidopsis thaliana (Mouse-ear cress) protein is Plant-specific TFIIB-related protein 1.